A 283-amino-acid chain; its full sequence is 4-hydroxy-3-methylbut-2-enyl diphosphate reductase (283 aa).

Cysteine 12 is a [4Fe-4S] cluster binding site. (2E)-4-hydroxy-3-methylbut-2-enyl diphosphate is bound by residues histidine 40 and histidine 73. 2 residues coordinate dimethylallyl diphosphate: histidine 40 and histidine 73. Positions 40 and 73 each coordinate isopentenyl diphosphate. Cysteine 95 is a binding site for [4Fe-4S] cluster. Histidine 123 provides a ligand contact to (2E)-4-hydroxy-3-methylbut-2-enyl diphosphate. Residue histidine 123 participates in dimethylallyl diphosphate binding. Position 123 (histidine 123) interacts with isopentenyl diphosphate. Glutamate 125 (proton donor) is an active-site residue. Threonine 161 contacts (2E)-4-hydroxy-3-methylbut-2-enyl diphosphate. Cysteine 189 provides a ligand contact to [4Fe-4S] cluster. (2E)-4-hydroxy-3-methylbut-2-enyl diphosphate-binding residues include serine 217, asparagine 219, and serine 261. Dimethylallyl diphosphate is bound by residues serine 217, asparagine 219, and serine 261. Positions 217, 219, and 261 each coordinate isopentenyl diphosphate.

The protein belongs to the IspH family. [4Fe-4S] cluster serves as cofactor.

It carries out the reaction isopentenyl diphosphate + 2 oxidized [2Fe-2S]-[ferredoxin] + H2O = (2E)-4-hydroxy-3-methylbut-2-enyl diphosphate + 2 reduced [2Fe-2S]-[ferredoxin] + 2 H(+). The enzyme catalyses dimethylallyl diphosphate + 2 oxidized [2Fe-2S]-[ferredoxin] + H2O = (2E)-4-hydroxy-3-methylbut-2-enyl diphosphate + 2 reduced [2Fe-2S]-[ferredoxin] + 2 H(+). It functions in the pathway isoprenoid biosynthesis; dimethylallyl diphosphate biosynthesis; dimethylallyl diphosphate from (2E)-4-hydroxy-3-methylbutenyl diphosphate: step 1/1. Its pathway is isoprenoid biosynthesis; isopentenyl diphosphate biosynthesis via DXP pathway; isopentenyl diphosphate from 1-deoxy-D-xylulose 5-phosphate: step 6/6. In terms of biological role, catalyzes the conversion of 1-hydroxy-2-methyl-2-(E)-butenyl 4-diphosphate (HMBPP) into a mixture of isopentenyl diphosphate (IPP) and dimethylallyl diphosphate (DMAPP). Acts in the terminal step of the DOXP/MEP pathway for isoprenoid precursor biosynthesis. The chain is 4-hydroxy-3-methylbut-2-enyl diphosphate reductase from Citrifermentans bemidjiense (strain ATCC BAA-1014 / DSM 16622 / JCM 12645 / Bem) (Geobacter bemidjiensis).